The primary structure comprises 334 residues: Glycerol-3-phosphate dehydrogenase [NAD(P)+] 2 (334 aa).

Trp16, Arg36, Arg37, and Lys110 together coordinate NADPH. The sn-glycerol 3-phosphate site is built by Lys110 and Gly140. Ala144 is an NADPH binding site. Sn-glycerol 3-phosphate-binding residues include Lys195, Asp248, Ser258, Arg259, and Asn260. Residue Lys195 is the Proton acceptor of the active site. Position 259 (Arg259) interacts with NADPH. Positions 282 and 284 each coordinate NADPH.

Belongs to the NAD-dependent glycerol-3-phosphate dehydrogenase family.

Its subcellular location is the cytoplasm. It carries out the reaction sn-glycerol 3-phosphate + NAD(+) = dihydroxyacetone phosphate + NADH + H(+). The catalysed reaction is sn-glycerol 3-phosphate + NADP(+) = dihydroxyacetone phosphate + NADPH + H(+). The protein operates within membrane lipid metabolism; glycerophospholipid metabolism. In terms of biological role, catalyzes the reduction of the glycolytic intermediate dihydroxyacetone phosphate (DHAP) to sn-glycerol 3-phosphate (G3P), the key precursor for phospholipid synthesis. The protein is Glycerol-3-phosphate dehydrogenase [NAD(P)+] 2 of Mycobacterium bovis (strain ATCC BAA-935 / AF2122/97).